Reading from the N-terminus, the 509-residue chain is Photosystem II CP47 reaction center protein (509 aa).

6 consecutive transmembrane segments (helical) span residues 21–36, 101–115, 140–156, 203–218, 237–252, and 457–472; these read SVHI…WAGS, IVFS…IWHW, GIHL…FGAF, IAAG…FHLS, VLSS…AFVV, and SFAL…HGAR.

It belongs to the PsbB/PsbC family. PsbB subfamily. As to quaternary structure, PSII is composed of 1 copy each of membrane proteins PsbA, PsbB, PsbC, PsbD, PsbE, PsbF, PsbH, PsbI, PsbJ, PsbK, PsbL, PsbM, PsbT, PsbX, PsbY, PsbZ, Psb30/Ycf12, at least 3 peripheral proteins of the oxygen-evolving complex and a large number of cofactors. It forms dimeric complexes. Binds multiple chlorophylls. PSII binds additional chlorophylls, carotenoids and specific lipids. serves as cofactor.

The protein resides in the plastid. It is found in the chloroplast thylakoid membrane. One of the components of the core complex of photosystem II (PSII). It binds chlorophyll and helps catalyze the primary light-induced photochemical processes of PSII. PSII is a light-driven water:plastoquinone oxidoreductase, using light energy to abstract electrons from H(2)O, generating O(2) and a proton gradient subsequently used for ATP formation. The sequence is that of Photosystem II CP47 reaction center protein from Cicer arietinum (Chickpea).